The primary structure comprises 490 residues: Cardiolipin synthase 1 (490 aa).

Transmembrane regions (helical) follow at residues 9–29 and 42–62; these read ILTILLVVGFITNVVLAFVII and WAWLFVLFVLPVIGFILYLFL. PLD phosphodiesterase domains follow at residues 225 to 252 and 403 to 430; these read MNNRNHRKIIIIDGQIGYVGGFNVGDDY and QNGFIHSKILMIDDEISSIGSANMDFRS. Catalysis depends on residues His230, Lys232, Asp237, His408, Lys410, and Asp415.

This sequence belongs to the phospholipase D family. Cardiolipin synthase subfamily.

Its subcellular location is the cell membrane. The catalysed reaction is 2 a 1,2-diacyl-sn-glycero-3-phospho-(1'-sn-glycerol) = a cardiolipin + glycerol. In terms of biological role, catalyzes the reversible phosphatidyl group transfer from one phosphatidylglycerol molecule to another to form cardiolipin (CL) (diphosphatidylglycerol) and glycerol. The polypeptide is Cardiolipin synthase 1 (cls1) (Staphylococcus epidermidis (strain ATCC 12228 / FDA PCI 1200)).